Reading from the N-terminus, the 746-residue chain is UvrABC system protein C (746 aa).

A GIY-YIG domain is found at 18–97; the sequence is AKPGVYKWRD…IKEFDPRFNV (80 aa). Residues 211-246 enclose the UVR domain; the sequence is RPYIAQLTRDMKEASAELEFEKAARLRDQIQMLETV. Positions 557–577 are disordered; it reads ANGNDNGEGGSDISGKGHAVP.

It belongs to the UvrC family. Interacts with UvrB in an incision complex.

The protein localises to the cytoplasm. Functionally, the UvrABC repair system catalyzes the recognition and processing of DNA lesions. UvrC both incises the 5' and 3' sides of the lesion. The N-terminal half is responsible for the 3' incision and the C-terminal half is responsible for the 5' incision. The chain is UvrABC system protein C from Bifidobacterium longum (strain DJO10A).